The sequence spans 523 residues: Polypyrimidine tract-binding protein 3 (523 aa).

The disordered stretch occupies residues methionine 1–proline 25. 3 consecutive RRM domains span residues arginine 30–asparagine 114, leucine 153–leucine 229, and serine 329–histidine 403. A Glycyl lysine isopeptide (Lys-Gly) (interchain with G-Cter in SUMO2) cross-link involves residue lysine 36. Position 98 is a phosphotyrosine (tyrosine 98). Position 109 is a phosphothreonine (threonine 109). Residue lysine 187 forms a Glycyl lysine isopeptide (Lys-Gly) (interchain with G-Cter in SUMO2) linkage. Lysine 394 carries the post-translational modification N6-acetyllysine. A disordered region spans residues valine 406–proline 426. A Phosphoserine modification is found at serine 425. The RRM 4 domain maps to alanine 446–serine 521.

As to quaternary structure, interacts with THBS4 (via the acidic amphipathic C-terminus). Detected specifically in spleen, thymus, lungs, and bone marrow.

RNA-binding protein that mediates pre-mRNA alternative splicing regulation. Plays a role in the regulation of cell proliferation, differentiation and migration. Positive regulator of EPO-dependent erythropoiesis. Participates in cell differentiation regulation by repressing tissue-specific exons. Promotes Fas exon 6 skipping. Binds RNA, preferentially to both poly(G) and poly(U). This Rattus norvegicus (Rat) protein is Polypyrimidine tract-binding protein 3 (Ptbp3).